We begin with the raw amino-acid sequence, 238 residues long: Small ribosomal subunit protein eS4 (238 aa).

One can recognise an S4 RNA-binding domain in the interval Leu38–Ala101.

The protein belongs to the eukaryotic ribosomal protein eS4 family.

In Pyrobaculum aerophilum (strain ATCC 51768 / DSM 7523 / JCM 9630 / CIP 104966 / NBRC 100827 / IM2), this protein is Small ribosomal subunit protein eS4.